We begin with the raw amino-acid sequence, 87 residues long: Retinal rod rhodopsin-sensitive cGMP 3',5'-cyclic phosphodiesterase subunit gamma (87 aa).

Methionine 1 is modified (N-acetylmethionine). The span at 1 to 12 shows a compositional bias: basic and acidic residues; it reads MNLEPPKAEIRS. Residues 1–55 are disordered; the sequence is MNLEPPKAEIRSATRVIGGPVTPRKGPPKFKQRQTRQFKSKPPKKGVQGFGDDIP. Residues 26–44 show a composition bias toward basic residues; sequence GPPKFKQRQTRQFKSKPPK.

This sequence belongs to the rod/cone cGMP-PDE gamma subunit family. In terms of assembly, oligomer composed of two catalytic chains (alpha and beta), an inhibitory chain (gamma) and the delta chain.

The catalysed reaction is 3',5'-cyclic GMP + H2O = GMP + H(+). In terms of biological role, participates in processes of transmission and amplification of the visual signal. cGMP-PDEs are the effector molecules in G-protein-mediated phototransduction in vertebrate rods and cones. This chain is Retinal rod rhodopsin-sensitive cGMP 3',5'-cyclic phosphodiesterase subunit gamma (PDE6G), found in Canis lupus familiaris (Dog).